A 637-amino-acid chain; its full sequence is Probable potassium transport system protein Kup (637 aa).

Helical transmembrane passes span 24 to 44, 64 to 84, 113 to 133, 151 to 171, 182 to 202, 225 to 245, 261 to 281, 290 to 310, 351 to 371, 381 to 401, 409 to 429, and 433 to 453; these read LAIA…LYAL, VISL…LLFV, AGAL…DAVI, PHLS…LFWI, LFGP…VYHI, LLQA…AEAL, AYGL…ALLI, PFFL…STVA, IYVP…VIGF, YGIA…VVMV, LLVG…FGAN, and VAQG…LLMT.

It belongs to the HAK/KUP transporter (TC 2.A.72) family.

It is found in the cell inner membrane. The catalysed reaction is K(+)(in) + H(+)(in) = K(+)(out) + H(+)(out). Its function is as follows. Transport of potassium into the cell. Likely operates as a K(+):H(+) symporter. In Burkholderia ambifaria (strain ATCC BAA-244 / DSM 16087 / CCUG 44356 / LMG 19182 / AMMD) (Burkholderia cepacia (strain AMMD)), this protein is Probable potassium transport system protein Kup.